Reading from the N-terminus, the 177-residue chain is Macro domain-containing protein in non 5'region (177 aa).

The region spanning methionine 1–arginine 177 is the Macro domain.

This sequence belongs to the MacroD-type family.

The polypeptide is Macro domain-containing protein in non 5'region (Streptomyces griseus).